The primary structure comprises 261 residues: Putative diacylated glycolipid transporter LprF (261 aa).

Residues Met1–Gly38 form the signal peptide. Cys39 is lipidated: N-palmitoyl cysteine. Cys39 carries the S-diacylglycerol cysteine lipid modification. The tract at residues Lys42 to Ile61 is disordered.

Belongs to the LppX/LprAFG lipoprotein family. As to quaternary structure, monomer. In terms of processing, modified by Lgt on Cys-39 with an S-linked diacylglycerol with a mixture of C16, C18 and C19 fatty acids (palmitic, stearic and tuberculostearic acid respectively), signal peptide is removed by LspA, modified by Lnt with an amide-linked mixture of C16 and C19 fatty acids.

It is found in the cell membrane. Its function is as follows. Might be involved in transporting short diacylated glycolipids to the cell outer membrane. Binds glycolipids that contain a diacylated glycerophosphate or a diacylated phosphatidylinositol moiety with C14 and C16 chains (upon overexpression in M.smegmatis; M.smegmatis does not encode this gene). Overexpression in M.smegmatis increases the cell wall glycolipid LAM/LM ratio (lipoarabinomannan/lipomannan), suggesting perhaps this protein is involved in the preferential translocation of diacylated LAM to the outer cell membrane. Overexpressing M.smegmatis cells adhere less well to hexadecane droplets, indicating decrease in the hydrophobicity of the cell surface, and have a slightly increased resistance to the antibiotic ethambutol. This Mycobacterium bovis (strain ATCC BAA-935 / AF2122/97) protein is Putative diacylated glycolipid transporter LprF (lprF).